The sequence spans 265 residues: Probable autolysin SsaALP (265 aa).

The first 25 residues, methionine 1–alanine 25, serve as a signal peptide directing secretion. LysM domains lie at threonine 27 to valine 70 and serine 89 to isoleucine 132. The disordered stretch occupies residues glycine 72 to threonine 92. Positions aspartate 74 to threonine 92 are enriched in polar residues. Residues threonine 141–histidine 265 enclose the Peptidase C51 domain.

It catalyses the reaction Hydrolyzes the link between N-acetylmuramoyl residues and L-amino acid residues in certain cell-wall glycopeptides.. Has weak lytic activity toward S.aureus cells. This is Probable autolysin SsaALP from Staphylococcus aureus (strain NCTC 8325 / PS 47).